We begin with the raw amino-acid sequence, 366 residues long: Protein-methionine-sulfoxide reductase catalytic subunit MsrP (366 aa).

The span at 1–22 shows a compositional bias: low complexity; that stretch reads MHNTFTHTKNNTHTKNNTQAKN. A disordered region spans residues 1 to 40; it reads MHNTFTHTKNNTHTKNNTQAKNSGSQTKSNAVSLNKPRKL. The segment at residues 1–76 is a signal peptide (tat-type signal); it reads MHNTFTHTKN…TLALPASAQA (76 aa). Over residues 23–33 the composition is skewed to polar residues; it reads SGSQTKSNAVS. Mo-molybdopterin-binding positions include N120, 123 to 124, C178, T213, N265, R270, and 281 to 283; these read YE and SIK.

The protein belongs to the MsrP family. As to quaternary structure, heterodimer of a catalytic subunit (MsrP) and a heme-binding subunit (MsrQ). Requires Mo-molybdopterin as cofactor. In terms of processing, predicted to be exported by the Tat system. The position of the signal peptide cleavage has not been experimentally proven.

Its subcellular location is the periplasm. The catalysed reaction is L-methionyl-[protein] + a quinone + H2O = L-methionyl-(S)-S-oxide-[protein] + a quinol. It catalyses the reaction L-methionyl-[protein] + a quinone + H2O = L-methionyl-(R)-S-oxide-[protein] + a quinol. Its function is as follows. Part of the MsrPQ system that repairs oxidized periplasmic proteins containing methionine sulfoxide residues (Met-O), using respiratory chain electrons. Thus protects these proteins from oxidative-stress damage caused by reactive species of oxygen and chlorine generated by the host defense mechanisms. MsrPQ is essential for the maintenance of envelope integrity under bleach stress, rescuing a wide series of structurally unrelated periplasmic proteins from methionine oxidation. The catalytic subunit MsrP is non-stereospecific, being able to reduce both (R-) and (S-) diastereoisomers of methionine sulfoxide. This chain is Protein-methionine-sulfoxide reductase catalytic subunit MsrP, found in Yersinia pestis.